The following is a 40-amino-acid chain: Meleagrin (40 aa).

At Gln1 the chain carries Pyrrolidone carboxylic acid. Disulfide bonds link Cys6-Cys33, Cys12-Cys28, and Cys16-Cys32.

Belongs to the transferrin family.

The chain is Meleagrin from Meleagris gallopavo (Wild turkey).